The following is a 321-amino-acid chain: Lipoyl synthase (321 aa).

Residues Cys68, Cys73, Cys79, Cys94, Cys98, Cys101, and Ser308 each contribute to the [4Fe-4S] cluster site. Residues 80–297 (FNHGTATFMI…KEIALELGFT (218 aa)) enclose the Radical SAM core domain.

It belongs to the radical SAM superfamily. Lipoyl synthase family. It depends on [4Fe-4S] cluster as a cofactor.

Its subcellular location is the cytoplasm. The enzyme catalyses [[Fe-S] cluster scaffold protein carrying a second [4Fe-4S](2+) cluster] + N(6)-octanoyl-L-lysyl-[protein] + 2 oxidized [2Fe-2S]-[ferredoxin] + 2 S-adenosyl-L-methionine + 4 H(+) = [[Fe-S] cluster scaffold protein] + N(6)-[(R)-dihydrolipoyl]-L-lysyl-[protein] + 4 Fe(3+) + 2 hydrogen sulfide + 2 5'-deoxyadenosine + 2 L-methionine + 2 reduced [2Fe-2S]-[ferredoxin]. Its pathway is protein modification; protein lipoylation via endogenous pathway; protein N(6)-(lipoyl)lysine from octanoyl-[acyl-carrier-protein]: step 2/2. Its function is as follows. Catalyzes the radical-mediated insertion of two sulfur atoms into the C-6 and C-8 positions of the octanoyl moiety bound to the lipoyl domains of lipoate-dependent enzymes, thereby converting the octanoylated domains into lipoylated derivatives. In Vibrio campbellii (strain ATCC BAA-1116), this protein is Lipoyl synthase.